Consider the following 105-residue polypeptide: Large ribosomal subunit protein bL21 (105 aa).

This sequence belongs to the bacterial ribosomal protein bL21 family. In terms of assembly, part of the 50S ribosomal subunit. Contacts protein L20.

Functionally, this protein binds to 23S rRNA in the presence of protein L20. The sequence is that of Large ribosomal subunit protein bL21 from Porphyromonas gingivalis (strain ATCC BAA-308 / W83).